Here is a 274-residue protein sequence, read N- to C-terminus: Large ribosomal subunit protein uL2 (274 aa).

The disordered stretch occupies residues G222 to G274. A compositionally biased stretch (basic and acidic residues) spans D229–G239.

It belongs to the universal ribosomal protein uL2 family. In terms of assembly, part of the 50S ribosomal subunit. Forms a bridge to the 30S subunit in the 70S ribosome.

Functionally, one of the primary rRNA binding proteins. Required for association of the 30S and 50S subunits to form the 70S ribosome, for tRNA binding and peptide bond formation. It has been suggested to have peptidyltransferase activity; this is somewhat controversial. Makes several contacts with the 16S rRNA in the 70S ribosome. The chain is Large ribosomal subunit protein uL2 from Thermosipho africanus (strain TCF52B).